A 576-amino-acid polypeptide reads, in one-letter code: Arginine--tRNA ligase (576 aa).

A 'HIGH' region motif is present at residues 123–133 (PNIGKEMHVGH).

Belongs to the class-I aminoacyl-tRNA synthetase family. As to quaternary structure, monomer.

It is found in the cytoplasm. It carries out the reaction tRNA(Arg) + L-arginine + ATP = L-arginyl-tRNA(Arg) + AMP + diphosphate. The polypeptide is Arginine--tRNA ligase (Wigglesworthia glossinidia brevipalpis).